Reading from the N-terminus, the 188-residue chain is Elongation factor P-like protein (188 aa).

It belongs to the elongation factor P family.

This chain is Elongation factor P-like protein, found in Xylella fastidiosa (strain 9a5c).